A 629-amino-acid chain; its full sequence is tRNA uridine 5-carboxymethylaminomethyl modification enzyme MnmG (629 aa).

FAD is bound by residues 13–18 (GGGHAG), Val125, and Ser180. 273-287 (GPRYCPSIEDKVMRF) provides a ligand contact to NAD(+). Gln370 provides a ligand contact to FAD.

The protein belongs to the MnmG family. As to quaternary structure, homodimer. Heterotetramer of two MnmE and two MnmG subunits. FAD is required as a cofactor.

The protein localises to the cytoplasm. In terms of biological role, NAD-binding protein involved in the addition of a carboxymethylaminomethyl (cmnm) group at the wobble position (U34) of certain tRNAs, forming tRNA-cmnm(5)s(2)U34. The protein is tRNA uridine 5-carboxymethylaminomethyl modification enzyme MnmG of Escherichia coli O127:H6 (strain E2348/69 / EPEC).